The following is an 89-amino-acid chain: Phosphocarrier protein HPr (89 aa).

An HPr domain is found at 1–88 (MLQRDTTIIN…ALIANRFGEG (88 aa)). Catalysis depends on His15, which acts as the Pros-phosphohistidine intermediate.

It belongs to the HPr family.

The protein localises to the cytoplasm. General (non sugar-specific) component of the phosphoenolpyruvate-dependent sugar phosphotransferase system (sugar PTS). This major carbohydrate active-transport system catalyzes the phosphorylation of incoming sugar substrates concomitantly with their translocation across the cell membrane. The phosphoryl group from phosphoenolpyruvate (PEP) is transferred to the phosphoryl carrier protein HPr by enzyme I. Phospho-HPr then transfers it to the PTS EIIA domain. The chain is Phosphocarrier protein HPr (phbH) from Cupriavidus necator (strain ATCC 17699 / DSM 428 / KCTC 22496 / NCIMB 10442 / H16 / Stanier 337) (Ralstonia eutropha).